The following is a 322-amino-acid chain: Thioredoxin reductase (322 aa).

FAD is bound by residues 12–15 (SGPA), 34–42 (EGAVTAGGA), Asn-51, and Val-84. Cys-136 and Cys-139 are oxidised to a cystine. Residues His-176, Arg-182, and Tyr-259 each contribute to the NADP(+) site. FAD-binding positions include Asp-279 and 286 to 289 (RQAI). Arg-286 contacts NADP(+).

It belongs to the class-II pyridine nucleotide-disulfide oxidoreductase family. As to quaternary structure, homodimer. Requires FAD as cofactor.

The enzyme catalyses [thioredoxin]-dithiol + NADP(+) = [thioredoxin]-disulfide + NADPH + H(+). Component of the thioredoxin-thioredoxin reductase system which may be involved in biosynthesis of penicillins and cephalosporins and may be important in determining the thiol-disulfide redox balance. The sequence is that of Thioredoxin reductase from Streptomyces clavuligerus.